We begin with the raw amino-acid sequence, 110 residues long: DNA-directed RNA polymerase subunit omega (110 aa).

It belongs to the RNA polymerase subunit omega family. In terms of assembly, the RNAP catalytic core consists of 2 alpha, 1 beta, 1 beta' and 1 omega subunit. When a sigma factor is associated with the core the holoenzyme is formed, which can initiate transcription.

The enzyme catalyses RNA(n) + a ribonucleoside 5'-triphosphate = RNA(n+1) + diphosphate. In terms of biological role, promotes RNA polymerase assembly. Latches the N- and C-terminal regions of the beta' subunit thereby facilitating its interaction with the beta and alpha subunits. In Mycobacterium bovis (strain ATCC BAA-935 / AF2122/97), this protein is DNA-directed RNA polymerase subunit omega (rpoZ).